A 211-amino-acid chain; its full sequence is Endonuclease III (211 aa).

Residues 108–127 (RAALEALPGVGRKTANVVLN) form the HhH domain. Residues C187, C194, C197, and C203 each contribute to the [4Fe-4S] cluster site.

Belongs to the Nth/MutY family. The cofactor is [4Fe-4S] cluster.

It catalyses the reaction 2'-deoxyribonucleotide-(2'-deoxyribose 5'-phosphate)-2'-deoxyribonucleotide-DNA = a 3'-end 2'-deoxyribonucleotide-(2,3-dehydro-2,3-deoxyribose 5'-phosphate)-DNA + a 5'-end 5'-phospho-2'-deoxyribonucleoside-DNA + H(+). Functionally, DNA repair enzyme that has both DNA N-glycosylase activity and AP-lyase activity. The DNA N-glycosylase activity releases various damaged pyrimidines from DNA by cleaving the N-glycosidic bond, leaving an AP (apurinic/apyrimidinic) site. The AP-lyase activity cleaves the phosphodiester bond 3' to the AP site by a beta-elimination, leaving a 3'-terminal unsaturated sugar and a product with a terminal 5'-phosphate. This Escherichia coli O6:H1 (strain CFT073 / ATCC 700928 / UPEC) protein is Endonuclease III.